A 117-amino-acid polypeptide reads, in one-letter code: Toxin CSTX-12 (117 aa).

The signal sequence occupies residues 1 to 20 (MKVLVICAVLFLTIFSNSSA). Positions 21–47 (ETEDDFLEDESFEADDVIPFLAREQVR) are excised as a propeptide. Cystine bridges form between C50–C65, C57–C74, C64–C95, and C76–C93. A propeptide spanning residues 82–87 (RSDTAR) is cleaved from the precursor. An Alanine amide modification is found at A116.

It belongs to the neurotoxin 19 (CSTX) family. 12 subfamily. Heterodimer of A and B chains; disulfide-linked. Interacts with CSTX-1 (AC P81694), and with CSTX-9 (AC P58604). Expressed by the venom gland.

Its subcellular location is the secreted. It localises to the target cell membrane. Functionally, synergistic toxin that induces or increases a cytolytic effect when combined with CSTX-1 (AC P81694) or CSTX-9 (AC P58604). When alone, has a weak insecticidal activity, with an unknown molecular target. This Cupiennius salei (American wandering spider) protein is Toxin CSTX-12.